A 519-amino-acid polypeptide reads, in one-letter code: Serine/threonine-protein kinase RIO3 (519 aa).

S8 and S112 each carry phosphoserine. At Y122 the chain carries Phosphotyrosine. Residues 122 to 159 (YEDSDSSEDEVDWQDTRDDPYRPAKPIPTPKKGFIGKG) are disordered. Acidic residues predominate over residues 124-134 (DSDSSEDEVDW). Residues S125, S127, and S128 each carry the phosphoserine modification. Residues 251-519 (ETITGCISTG…DGGPPILYDE (269 aa)) form the Protein kinase domain. ATP-binding positions include 257-265 (ISTGKESVV) and K290. D406 acts as the Proton acceptor in catalysis.

It belongs to the protein kinase superfamily. RIO-type Ser/Thr kinase family. As to quaternary structure, interacts with CASP10. Interacts with IRF3; RIOK3 probably mediates the interaction of TBK1 with IRF3. Associated with 40S pre-ribosomal particles. Requires Mg(2+) as cofactor. Autophosphorylated (in vitro).

The protein resides in the cytoplasm. It catalyses the reaction L-seryl-[protein] + ATP = O-phospho-L-seryl-[protein] + ADP + H(+). It carries out the reaction L-threonyl-[protein] + ATP = O-phospho-L-threonyl-[protein] + ADP + H(+). Its function is as follows. Involved in regulation of type I interferon (IFN)-dependent immune response which plays a critical role in the innate immune response against DNA and RNA viruses. May act as an adapter protein essential for the recruitment of TBK1 to IRF3. Phosphorylates IFIH1 within the C-terminal region interfering with IFIH1 filament assembly on long dsRNA and resulting in attenuated IFIH1-signaling. Can inhibit CASP10 isoform 7-mediated activation of the NF-kappaB signaling pathway. May play a role in the biogenesis of the 40S ribosomal subunit. Involved in the processing of 21S pre-rRNA to the mature 18S rRNA. The protein is Serine/threonine-protein kinase RIO3 (RIOK3) of Bos taurus (Bovine).